The sequence spans 441 residues: CBL-interacting serine/threonine-protein kinase 6 (441 aa).

Residues 24–278 (YELGRLLGHG…IEKVMDSPWF (255 aa)) form the Protein kinase domain. ATP contacts are provided by residues 30-38 (LGHGTFAKV) and K53. D146 acts as the Proton acceptor in catalysis. An activation loop region spans residues 164-193 (DFGLSAFTEHLKQDGLLHTTCGTPAYVAPE). S168 bears the Phosphoserine mark. Position 182 is a phosphothreonine (T182). The NAF domain occupies 310 to 334 (EETETLNAFHIIALSEGFDLSPLFE). The interval 341–371 (KREMRFATSRPASSVISSLEEAARVGNKFDV) is PPI.

This sequence belongs to the protein kinase superfamily. CAMK Ser/Thr protein kinase family. SNF1 subfamily. As to quaternary structure, part of a K(+)-channel calcium-sensing kinase/phosphatase complex composed by a calcium sensor CBL (CBL1, CBL2, CBL3 or CBL9), a kinase CIPK (CIPK6, CIPK16 or CIPK23), a phosphatase PP2C (AIP1) and a K(+)-channel (AKT1). Interacts with AKT1, AKT2,CBL1, CBL2, CBL3, CBL4/SOS3 and CBL9. Mn(2+) is required as a cofactor. Post-translationally, autophosphorylated. As to expression, expressed in roots and shoots.

It is found in the endoplasmic reticulum. It catalyses the reaction L-seryl-[protein] + ATP = O-phospho-L-seryl-[protein] + ADP + H(+). The enzyme catalyses L-threonyl-[protein] + ATP = O-phospho-L-threonyl-[protein] + ADP + H(+). Functionally, CIPK serine-threonine protein kinases interact with CBL proteins. Binding of a CBL protein to the regulatory NAF domain of CIPK protein lead to the activation of the kinase in a calcium-dependent manner. Downstream of CBL1, CBL2, CBL3 and CBL9, regulates by phosphorylation the K(+) conductance and uptake of AKT1. Binds to CBL4 to modulate AKT2 activity by promoting a kinase interaction-dependent but phosphorylation-independent translocation of the channel to the plasma membrane. This chain is CBL-interacting serine/threonine-protein kinase 6 (CIPK6), found in Arabidopsis thaliana (Mouse-ear cress).